The primary structure comprises 198 residues: Probable thymidylate kinase (198 aa).

ATP is bound at residue 9-16 (GIDGSGKT).

It belongs to the thymidylate kinase family.

It carries out the reaction dTMP + ATP = dTDP + ADP. The protein is Probable thymidylate kinase of Methanococcus vannielii (strain ATCC 35089 / DSM 1224 / JCM 13029 / OCM 148 / SB).